We begin with the raw amino-acid sequence, 316 residues long: Methionyl-tRNA formyltransferase (316 aa).

(6S)-5,6,7,8-tetrahydrofolate is bound at residue Ser-110 to Pro-113.

Belongs to the Fmt family.

It carries out the reaction L-methionyl-tRNA(fMet) + (6R)-10-formyltetrahydrofolate = N-formyl-L-methionyl-tRNA(fMet) + (6S)-5,6,7,8-tetrahydrofolate + H(+). Its function is as follows. Attaches a formyl group to the free amino group of methionyl-tRNA(fMet). The formyl group appears to play a dual role in the initiator identity of N-formylmethionyl-tRNA by promoting its recognition by IF2 and preventing the misappropriation of this tRNA by the elongation apparatus. This Halothermothrix orenii (strain H 168 / OCM 544 / DSM 9562) protein is Methionyl-tRNA formyltransferase.